Consider the following 513-residue polypeptide: V-type proton ATPase subunit B, kidney isoform (513 aa).

Residue R394 participates in ATP binding. A PDZ-binding motif is present at residues 510 to 513 (DTAL).

It belongs to the ATPase alpha/beta chains family. As to quaternary structure, V-ATPase is a heteromultimeric enzyme made up of two complexes: the ATP-hydrolytic V1 complex and the proton translocation V0 complex. The V1 complex consists of three catalytic AB heterodimers that form a heterohexamer, three peripheral stalks each consisting of EG heterodimers, one central rotor including subunits D and F, and the regulatory subunits C and H. The proton translocation complex V0 consists of the proton transport subunit a, a ring of proteolipid subunits c9c'', rotary subunit d, subunits e and f, and the accessory subunits ATP6AP1/Ac45 and ATP6AP2/PRR. Forms a complex with NHERF1 and SCL4A7. As to expression, kidney; localizes to early distal nephron, encompassing thick ascending limbs and distal convoluted tubules (at protein level). Expressed in the cochlea and endolymphatic sac.

The protein localises to the apical cell membrane. It localises to the basolateral cell membrane. In terms of biological role, non-catalytic subunit of the V1 complex of vacuolar(H+)-ATPase (V-ATPase), a multisubunit enzyme composed of a peripheral complex (V1) that hydrolyzes ATP and a membrane integral complex (V0) that translocates protons. V-ATPase is responsible for acidifying and maintaining the pH of intracellular compartments and in some cell types, is targeted to the plasma membrane, where it is responsible for acidifying the extracellular environment. Essential for the proper assembly and activity of V-ATPase. In renal intercalated cells, mediates secretion of protons (H+) into the urine thereby ensuring correct urinary acidification. Required for optimal olfactory function by mediating the acidification of the nasal olfactory epithelium. This chain is V-type proton ATPase subunit B, kidney isoform (ATP6V1B1), found in Homo sapiens (Human).